Here is a 90-residue protein sequence, read N- to C-terminus: Putative toxin RelE1 (90 aa).

Belongs to the RelE toxin family.

Functionally, toxic component of a type II toxin-antitoxin (TA) system. Its cognate antitoxin is RelB1 (Potential). The sequence is that of Putative toxin RelE1 (relE1) from Methanocaldococcus jannaschii (strain ATCC 43067 / DSM 2661 / JAL-1 / JCM 10045 / NBRC 100440) (Methanococcus jannaschii).